Consider the following 109-residue polypeptide: MAYRALMVLRMDPADAEHVAAAFAEHDTTELPLEIGVRRRVLFRFHDLYMHLIEADDDIMERLYQARSHPLFQEVNERVGQYLTPYAQDWEELKDSKAEVFYSWTAPDS.

Homodimer.

It catalyses the reaction tetracenomycin F2 + H(+) = tetracenomycin F1 + H2O. It participates in antibiotic biosynthesis; tetracenomycin C biosynthesis. Its function is as follows. Catalyzing the conversion of tetracenomycin F2 to tetracenomycin F1. The polypeptide is Tetracenomycin F2 cyclase (tcmI) (Streptomyces glaucescens).